The chain runs to 321 residues: Tetraacyldisaccharide 4'-kinase (321 aa).

Serine 54–threonine 61 contributes to the ATP binding site.

Belongs to the LpxK family.

It carries out the reaction a lipid A disaccharide + ATP = a lipid IVA + ADP + H(+). The protein operates within glycolipid biosynthesis; lipid IV(A) biosynthesis; lipid IV(A) from (3R)-3-hydroxytetradecanoyl-[acyl-carrier-protein] and UDP-N-acetyl-alpha-D-glucosamine: step 6/6. In terms of biological role, transfers the gamma-phosphate of ATP to the 4'-position of a tetraacyldisaccharide 1-phosphate intermediate (termed DS-1-P) to form tetraacyldisaccharide 1,4'-bis-phosphate (lipid IVA). The chain is Tetraacyldisaccharide 4'-kinase from Rickettsia rickettsii.